We begin with the raw amino-acid sequence, 356 residues long: tRNA N6-adenosine threonylcarbamoyltransferase (356 aa).

Residues His-115 and His-119 each contribute to the Fe cation site. Substrate is bound by residues 138–142, Asp-171, Gly-184, and Asn-283; that span reads LVSGG. A Fe cation-binding site is contributed by Asp-311.

Belongs to the KAE1 / TsaD family. Fe(2+) serves as cofactor.

The protein localises to the cytoplasm. The catalysed reaction is L-threonylcarbamoyladenylate + adenosine(37) in tRNA = N(6)-L-threonylcarbamoyladenosine(37) in tRNA + AMP + H(+). Functionally, required for the formation of a threonylcarbamoyl group on adenosine at position 37 (t(6)A37) in tRNAs that read codons beginning with adenine. Is involved in the transfer of the threonylcarbamoyl moiety of threonylcarbamoyl-AMP (TC-AMP) to the N6 group of A37, together with TsaE and TsaB. TsaD likely plays a direct catalytic role in this reaction. This is tRNA N6-adenosine threonylcarbamoyltransferase from Synechococcus sp. (strain WH7803).